Consider the following 989-residue polypeptide: Frequency clock protein (989 aa).

3 disordered regions span residues 1–139 (MADS…PGFR), 208–290 (FAAS…VGTQ), and 331–445 (ISGR…PDRV). A compositionally biased stretch (basic and acidic residues) spans 36–45 (ENHRLARDTS). A compositionally biased stretch (polar residues) spans 46-88 (SRVTSSSALGVTESQPQLKSSPTRRNSSGESEPTNWFNQSNRN). Residues 109 to 119 (KETDSSNEESR) are compositionally biased toward basic and acidic residues. Residues 233 to 255 (HSSGVSLSKHDSSSSSRSRPVDS) show a composition bias toward low complexity. 2 stretches are compositionally biased toward polar residues: residues 256 to 274 (AYNS…SSGP) and 334 to 343 (RNMQRNQSMP). Basic and acidic residues predominate over residues 377 to 386 (DNPRKNRSSK). Over residues 387-397 (DNGSASNSGGD) the composition is skewed to polar residues. Residues 402–418 (GGTGTGSGDGSGSGGRT) are compositionally biased toward gly residues. A compositionally biased stretch (basic and acidic residues) spans 433-444 (RPTRPRDLDPDR). T501 carries the post-translational modification Phosphothreonine. 2 positions are modified to phosphoserine: S513 and S519. Disordered regions lie at residues 524 to 642 (KIRW…QRRK), 865 to 907 (WDDG…TYMR), and 968 to 989 (SVAT…VSSS). The Nuclear localization signal motif lies at 564 to 568 (RKKRK). Residues 598 to 615 (RNSSSIETSLEESMSQGS) are compositionally biased toward polar residues. Residues 865–886 (WDDGDDLASDDEEVEEVEEDSY) show a composition bias toward acidic residues. A compositionally biased stretch (polar residues) spans 978–989 (GYSSSMEDVSSS).

The protein belongs to the FRQ family. Progressive phosphorylation during the late circadian day and early night. Phosphorylation is also involved in regulating frq degradation. Phosphorylation by CKII may have at least three functions; it decreases the stability of frq, reduces the protein complex formation between frq and the white collar proteins, and is important for the closing of the Neurospora circadian negative feedback loop.

The protein resides in the nucleus. Circadian clock component involved in the generation of biological rhythms, in particular in rhythm stability, period length, and temperature compensation. Oscillates in abundance with a daily peak early in the morning. Behaves as a negative element in circadian transcriptional loop. May bind to wc-2 protein. The complex frq-wc-2 may turn off the expression of frq. This is Frequency clock protein (frq) from Neurospora crassa (strain ATCC 24698 / 74-OR23-1A / CBS 708.71 / DSM 1257 / FGSC 987).